The primary structure comprises 384 residues: Transcription factor 7 (384 aa).

Residues 1–16 (MPQLDSGGGGAGGGDD) show a composition bias toward gly residues. Residues 1–59 (MPQLDSGGGGAGGGDDLGAPDELLAFQDEGEEQDDKSRDSAAGPERDLAELKSSLVNES) are CTNNB1-binding. Disordered stretches follow at residues 1-88 (MPQL…LGRE), 133-183 (PPSG…QKQV), and 337-384 (SARD…MTVL). Basic and acidic residues predominate over residues 35–50 (DKSRDSAAGPERDLAE). The span at 62-78 (AAGGAGIPGVPGAGAGA) shows a compositional bias: gly residues. Positions 269–337 (IKKPLNAFML…LHMQLYPGWS (69 aa)) form a DNA-binding region, HMG box. The Nuclear localization signal motif lies at 344-348 (KKKRR). Basic and acidic residues predominate over residues 352 to 370 (KHQESTTGGKRNAFGTYPE). Over residues 374–384 (APAPFLPMTVL) the composition is skewed to low complexity.

This sequence belongs to the TCF/LEF family. As to quaternary structure, binds the armadillo repeat of CTNNB1 and forms a stable complex. Interacts with TLE5, TLE1, TLE2, TLE3 and TLE4. Interacts with MLLT11. Long isoform interacts (via N-terminus) with SOX13; inhibits WNT-mediated transcriptional activity. Interacts with DAZAP2. In terms of tissue distribution, predominantly expressed in T-cells. Also detected in proliferating intestinal epithelial cells and in the basal epithelial cells of mammary gland epithelium.

It is found in the nucleus. Its function is as follows. Transcriptional activator involved in T-cell lymphocyte differentiation. Necessary for the survival of CD4(+) CD8(+) immature thymocytes. Isoforms lacking the N-terminal CTNNB1 binding domain cannot fulfill this role. Binds to the T-lymphocyte-specific enhancer element (5'-WWCAAAG-3') found in the promoter of the CD3E gene. Represses expression of the T-cell receptor gamma gene in alpha-beta T-cell lineages. Required for the development of natural killer receptor-positive lymphoid tissue inducer T-cells. TLE1, TLE2, TLE3 and TLE4 repress transactivation mediated by TCF7 and CTNNB1. May also act as feedback transcriptional repressor of CTNNB1 and TCF7L2 target genes. The polypeptide is Transcription factor 7 (Homo sapiens (Human)).